A 211-amino-acid chain; its full sequence is Redox-sensing transcriptional repressor Rex (211 aa).

Residues 17 to 56 (LYYRFVSSLKSKGIDRVNSKAISDALQIDSATIRRDFSYF) constitute a DNA-binding region (H-T-H motif). 91 to 96 (GVGNLG) lines the NAD(+) pocket.

Belongs to the transcriptional regulatory Rex family. Homodimer.

The protein localises to the cytoplasm. Modulates transcription in response to changes in cellular NADH/NAD(+) redox state. This Staphylococcus aureus (strain Mu3 / ATCC 700698) protein is Redox-sensing transcriptional repressor Rex.